The chain runs to 111 residues: Large ribosomal subunit protein P2 (111 aa).

The tract at residues 81-111 (AAGGAAAPAAEEKKEEEKEESDEDMGFGLFD) is disordered. Position 101 is a phosphoserine (Ser-101).

It belongs to the eukaryotic ribosomal protein P1/P2 family. P1 and P2 exist as dimers at the large ribosomal subunit.

In terms of biological role, plays an important role in the elongation step of protein synthesis. This is Large ribosomal subunit protein P2 from Aspergillus fumigatus (strain ATCC MYA-4609 / CBS 101355 / FGSC A1100 / Af293) (Neosartorya fumigata).